Reading from the N-terminus, the 313-residue chain is Proclavaminate amidinohydrolase (313 aa).

The Mn(2+) site is built by histidine 121, aspartate 144, histidine 146, aspartate 148, aspartate 235, and aspartate 237.

This sequence belongs to the arginase family. Homohexamer. Requires Mn(2+) as cofactor.

It carries out the reaction amidinoproclavaminate + H2O = proclavaminate + urea. Its pathway is antibiotic biosynthesis; clavulanate biosynthesis; clavulanate from D-glyceraldehyde 3-phosphate and L-arginine: step 4/8. The protein is Proclavaminate amidinohydrolase (pah) of Streptomyces clavuligerus.